We begin with the raw amino-acid sequence, 335 residues long: Ferrochelatase (335 aa).

Fe cation is bound by residues His194 and Glu275.

Belongs to the ferrochelatase family.

The protein localises to the cytoplasm. The enzyme catalyses heme b + 2 H(+) = protoporphyrin IX + Fe(2+). It participates in porphyrin-containing compound metabolism; protoheme biosynthesis; protoheme from protoporphyrin-IX: step 1/1. Its function is as follows. Catalyzes the ferrous insertion into protoporphyrin IX. This chain is Ferrochelatase, found in Sodalis glossinidius (strain morsitans).